The following is a 429-amino-acid chain: Endoglucanase A (429 aa).

The signal sequence occupies residues 1 to 34 (MVSKKQKFLTVILVIVLAIVIVGGVFGISFVKGR). Positions 46–94 (AKTEQVKEPAKEEPKLVIKEKKQDESAKKEQELKKAKEEAEAAVEKETE) are enriched in basic and acidic residues. The disordered stretch occupies residues 46 to 100 (AKTEQVKEPAKEEPKLVIKEKKQDESAKKEQELKKAKEEAEAAVEKETEKTEEEP). E249 functions as the Proton donor in the catalytic mechanism. E334 functions as the Nucleophile in the catalytic mechanism.

This sequence belongs to the glycosyl hydrolase 5 (cellulase A) family.

The catalysed reaction is Endohydrolysis of (1-&gt;4)-beta-D-glucosidic linkages in cellulose, lichenin and cereal beta-D-glucans.. The protein is Endoglucanase A (celA) of Butyrivibrio fibrisolvens.